A 233-amino-acid chain; its full sequence is Adapter protein MecA (233 aa).

The protein belongs to the MecA family. In terms of assembly, homodimer.

Enables the recognition and targeting of unfolded and aggregated proteins to the ClpC protease or to other proteins involved in proteolysis. This is Adapter protein MecA from Lactococcus lactis subsp. lactis (strain IL1403) (Streptococcus lactis).